Consider the following 729-residue polypeptide: Polyribonucleotide nucleotidyltransferase (729 aa).

The Mg(2+) site is built by D516 and D522. Residues 581-641 form the KH domain; sequence PSTEHFSINP…EKVAAAKEHI (61 aa). The region spanning 658-725 is the S1 motif domain; sequence GKTYVGKVKK…KGKKVELATP (68 aa).

Belongs to the polyribonucleotide nucleotidyltransferase family. The cofactor is Mg(2+).

The protein localises to the cytoplasm. The enzyme catalyses RNA(n+1) + phosphate = RNA(n) + a ribonucleoside 5'-diphosphate. Its function is as follows. Involved in mRNA degradation. Catalyzes the phosphorolysis of single-stranded polyribonucleotides processively in the 3'- to 5'-direction. In Sulfurovum sp. (strain NBC37-1), this protein is Polyribonucleotide nucleotidyltransferase.